The chain runs to 583 residues: Ankyrin repeat and SOCS box protein 15 (583 aa).

11 ANK repeats span residues 75–104 (KGWF…KTLW), 110–139 (DGET…WPNT), 143–172 (KGET…SLDQ), 176–205 (KRWS…NVHL), 209–238 (FGVT…DVFA), 242–271 (DGAS…SGNV), 275–304 (AGHL…KHAI), 307–336 (SGLT…DVNA), 349–378 (ERKT…DPNL), 379–408 (DPLN…NVNC), and 416–444 (TRFP…QVEL). The region spanning 524–579 (WPEIRQIIENPCSLKHLCRLKIRRVMGLQRLCQPASIQMLPLPAAMRRYLLFKEFD) is the SOCS box domain.

Belongs to the ankyrin SOCS box (ASB) family.

It functions in the pathway protein modification; protein ubiquitination. In terms of biological role, may be a substrate-recognition component of a SCF-like ECS (Elongin-Cullin-SOCS-box protein) E3 ubiquitin-protein ligase complex which mediates the ubiquitination and subsequent proteasomal degradation of target proteins. The sequence is that of Ankyrin repeat and SOCS box protein 15 (Asb15) from Mus musculus (Mouse).